Consider the following 472-residue polypeptide: Chromosomal replication initiator protein DnaA (472 aa).

Positions 1–73 (MSNMEQDRWS…LSCWQAELPE (73 aa)) are domain I, interacts with DnaA modulators. Residues 73–128 (EVNRVDLTVRSPVRCATPAKEVPAPVESRRDEQRPSAERSNGATPVSANHDALGGS) form a domain II region. Positions 90-124 (PAKEVPAPVESRRDEQRPSAERSNGATPVSANHDA) are disordered. Positions 99 to 109 (ESRRDEQRPSA) are enriched in basic and acidic residues. Residues 110–119 (ERSNGATPVS) are compositionally biased toward polar residues. The segment at 129–351 (PLDPRLTFAS…GAINRLLAHS (223 aa)) is domain III, AAA+ region. Residues glycine 176, glycine 178, lysine 179, and threonine 180 each coordinate ATP. Residues 352 to 472 (KLNNQPVTLE…VESLKRQLQE (121 aa)) form a domain IV, binds dsDNA region.

The protein belongs to the DnaA family. Oligomerizes as a right-handed, spiral filament on DNA at oriC.

The protein resides in the cytoplasm. Plays an essential role in the initiation and regulation of chromosomal replication. ATP-DnaA binds to the origin of replication (oriC) to initiate formation of the DNA replication initiation complex once per cell cycle. Binds the DnaA box (a 9 base pair repeat at the origin) and separates the double-stranded (ds)DNA. Forms a right-handed helical filament on oriC DNA; dsDNA binds to the exterior of the filament while single-stranded (ss)DNA is stabiized in the filament's interior. The ATP-DnaA-oriC complex binds and stabilizes one strand of the AT-rich DNA unwinding element (DUE), permitting loading of DNA polymerase. After initiation quickly degrades to an ADP-DnaA complex that is not apt for DNA replication. Binds acidic phospholipids. This Rhodopseudomonas palustris (strain ATCC BAA-98 / CGA009) protein is Chromosomal replication initiator protein DnaA.